Consider the following 348-residue polypeptide: MHKVKLAAITCELPARSYENDDPVFAAVPDLSESWWQFWGVNRRGYFDPRNGENEFSLVVRAAERLLRSSDTAPDSVDMLICSASSPIMTDAGDVLPDLRGRLYPRMANVLSKQLGLSRALPLDSQMECASFLLNLRLAASMIRQGKAEKVLVVCSEYISNLLDFTSRTSTLFADGCAVALLTRGDDDSCDLLASAEHSDATFYEVATGRWRLPENPTGEAKPRLYFSLFSDGQNKMASFVPTNVPIAMRRALEKAGLGSDDIDYFVFHQPAPFLVKAWAEGIGARPEQYQLTMGDTGVMISVSIPYTLMTGLREGKIRPGDRIVMAGAATGWGFAAQVWQLGEVLVC.

The Acyl-thioester intermediate role is filled by Cys-129. His-269 is an active-site residue.

This sequence belongs to the thiolase-like superfamily. FabH family. As to quaternary structure, forms a tight complex with PqsB.

The protein resides in the cytoplasm. It carries out the reaction (2-aminobenzoyl)acetate + octanoyl-CoA + H(+) = 2-heptyl-4(1H)-quinolone + CO2 + CoA + H2O. With respect to regulation, folding of PqsC and binding of octanoate are promoted by PqsB. Binding of the octanoyl group probably increases the binding affinity of the complex for 2-ABA. Activity of the complex is inhibited by 2-aminoacetophenone (2-AA). Its function is as follows. Required for the biosynthesis of the quorum-sensing signaling molecules 2-heptyl-4(1H)-quinolone (HHQ) and 2-heptyl-3-hydroxy-4(1H)-quinolone (Pseudomonas quinolone signal or PQS), which are important for biofilm formation and virulence. The PqsC/PqsB complex catalyzes the condensation of 2-aminobenzoylacetate (2-ABA) and octanoyl-CoA to form HHQ. First, PqsC acquires an octanoyl group from octanoyl-CoA and forms an octanoyl-PqsC intermediate. Then, together with PqsB, it catalyzes the coupling of 2-ABA with the octanoate group, leading to decarboxylation and dehydration, and resulting in closure of the quinoline ring. The polypeptide is 2-heptyl-4(1H)-quinolone synthase subunit PqsC (Pseudomonas aeruginosa (strain ATCC 15692 / DSM 22644 / CIP 104116 / JCM 14847 / LMG 12228 / 1C / PRS 101 / PAO1)).